Here is a 542-residue protein sequence, read N- to C-terminus: uncharacterized protein (542 aa).

12 helical membrane-spanning segments follow: residues 12 to 32 (LVFG…GTVL), 57 to 77 (FGDV…AILY), 94 to 114 (VIVM…SWTA), 123 to 143 (AAAV…AGLA), 168 to 188 (LFAV…AALV), 191 to 211 (FVVS…LVTL), 216 to 236 (IDAP…AFLL), 243 to 263 (SGVV…PTVI), 277 to 297 (IATF…IPGA), 313 to 333 (VLAL…VQAT), 358 to 378 (VTSW…AVPM), and 391 to 411 (LIIF…GTSL).

Belongs to the monovalent cation:proton antiporter 1 (CPA1) transporter (TC 2.A.36) family.

It is found in the cell membrane. This is an uncharacterized protein from Mycobacterium bovis (strain ATCC BAA-935 / AF2122/97).